A 264-amino-acid chain; its full sequence is Movement protein (264 aa).

The span at 210–219 (FRTKPSKRGP) shows a compositional bias: basic residues. The disordered stretch occupies residues 210 to 264 (FRTKPSKRGPKNNNNLGKGRSGGRPKPKSFDEVEKEFDNLIEDEAETSVADSDSY). The span at 237 to 247 (KSFDEVEKEFD) shows a compositional bias: basic and acidic residues.

This sequence belongs to the tobamovirus movement protein family. In terms of assembly, binds to host RBCS at the plasmodesmata; this interaction seems required for viral systemic movement. In resistant plants, interacts with host MBP2C at host microtubules; this interaction prevents virus cell to cell movement. In resistant plants, interacts with host resistance (R) protein (e.g. tomato ToMV resistance protein TM-2(2), AC Q71BG9) at the host plasma membrane; this interaction triggers host defense responses leading to programmed cell death.

The protein localises to the host cytoplasm. The protein resides in the host cytoskeleton. It localises to the host cell junction. Its subcellular location is the host plasmodesma. Functionally, transports viral genome to neighboring plant cells directly through plasmosdesmata, without any budding. The movement protein allows efficient cell to cell propagation, by bypassing the host cell wall barrier. Forms a ribonucleoprotein complex with viral RNA. Binds microtubules and modulates microtubule stability. Can bind double-stranded DNA. Triggers host hypersensitive defense reaction in incompatible plants harboring resistance (R) proteins. The chain is Movement protein (MP) from Tomato mosaic virus (strain LII) (ToMV).